The primary structure comprises 1409 residues: DNA-directed RNA polymerase subunit beta' (1409 aa).

Zn(2+) is bound by residues Cys-69, Cys-71, Cys-84, and Cys-87. 3 residues coordinate Mg(2+): Asp-461, Asp-463, and Asp-465. Cys-805, Cys-879, Cys-886, and Cys-889 together coordinate Zn(2+).

This sequence belongs to the RNA polymerase beta' chain family. In terms of assembly, the RNAP catalytic core consists of 2 alpha, 1 beta, 1 beta' and 1 omega subunit. When a sigma factor is associated with the core the holoenzyme is formed, which can initiate transcription. The cofactor is Mg(2+). Zn(2+) is required as a cofactor.

It carries out the reaction RNA(n) + a ribonucleoside 5'-triphosphate = RNA(n+1) + diphosphate. In terms of biological role, DNA-dependent RNA polymerase catalyzes the transcription of DNA into RNA using the four ribonucleoside triphosphates as substrates. This is DNA-directed RNA polymerase subunit beta' from Anaplasma phagocytophilum (strain HZ).